A 548-amino-acid chain; its full sequence is Chaperonin GroEL (548 aa).

ATP-binding positions include 30–33 (TLGP), Lys-51, 87–91 (DGTTT), Gly-415, and Asp-496. The segment at 527–548 (SDKEDAMPPMRGGMGGMGGMDF) is disordered. Gly residues predominate over residues 538-548 (GGMGGMGGMDF).

Belongs to the chaperonin (HSP60) family. In terms of assembly, forms a cylinder of 14 subunits composed of two heptameric rings stacked back-to-back. Interacts with the co-chaperonin GroES.

It localises to the cytoplasm. It catalyses the reaction ATP + H2O + a folded polypeptide = ADP + phosphate + an unfolded polypeptide.. Functionally, together with its co-chaperonin GroES, plays an essential role in assisting protein folding. The GroEL-GroES system forms a nano-cage that allows encapsulation of the non-native substrate proteins and provides a physical environment optimized to promote and accelerate protein folding. The protein is Chaperonin GroEL of Rickettsia akari (strain Hartford).